The primary structure comprises 664 residues: Protein-arginine deiminase type-3 (664 aa).

It belongs to the protein arginine deiminase family. Requires Ca(2+) as cofactor. Hair follicles, and epidermis at very low levels.

The protein localises to the cytoplasm. It catalyses the reaction L-arginyl-[protein] + H2O = L-citrullyl-[protein] + NH4(+). Functionally, catalyzes the deimination of arginine residues of proteins. This is Protein-arginine deiminase type-3 (PADI3) from Homo sapiens (Human).